The primary structure comprises 402 residues: Probable tRNA sulfurtransferase (402 aa).

A THUMP domain is found at 61 to 166 (EEIMKRISKV…SDAAYLYSRV (106 aa)). ATP-binding positions include 184–185 (ML), 209–210 (HF), Arg266, Gly288, and Gln297.

Belongs to the ThiI family.

The protein localises to the cytoplasm. The catalysed reaction is [ThiI sulfur-carrier protein]-S-sulfanyl-L-cysteine + a uridine in tRNA + 2 reduced [2Fe-2S]-[ferredoxin] + ATP + H(+) = [ThiI sulfur-carrier protein]-L-cysteine + a 4-thiouridine in tRNA + 2 oxidized [2Fe-2S]-[ferredoxin] + AMP + diphosphate. The enzyme catalyses [ThiS sulfur-carrier protein]-C-terminal Gly-Gly-AMP + S-sulfanyl-L-cysteinyl-[cysteine desulfurase] + AH2 = [ThiS sulfur-carrier protein]-C-terminal-Gly-aminoethanethioate + L-cysteinyl-[cysteine desulfurase] + A + AMP + 2 H(+). It participates in cofactor biosynthesis; thiamine diphosphate biosynthesis. Catalyzes the ATP-dependent transfer of a sulfur to tRNA to produce 4-thiouridine in position 8 of tRNAs, which functions as a near-UV photosensor. Also catalyzes the transfer of sulfur to the sulfur carrier protein ThiS, forming ThiS-thiocarboxylate. This is a step in the synthesis of thiazole, in the thiamine biosynthesis pathway. The sulfur is donated as persulfide by IscS. The polypeptide is Probable tRNA sulfurtransferase (Macrococcus caseolyticus (strain JCSC5402) (Macrococcoides caseolyticum)).